We begin with the raw amino-acid sequence, 49 residues long: Large ribosomal subunit protein bL33A (49 aa).

It belongs to the bacterial ribosomal protein bL33 family.

The polypeptide is Large ribosomal subunit protein bL33A (Bacillus pumilus (strain SAFR-032)).